A 188-amino-acid chain; its full sequence is NADH-quinone oxidoreductase subunit I (188 aa).

4Fe-4S ferredoxin-type domains are found at residues 44–74 (LNRY…VEGA) and 90–119 (QVYQ…MTNE). [4Fe-4S] cluster-binding residues include Cys-54, Cys-57, Cys-60, Cys-64, Cys-99, Cys-102, Cys-105, and Cys-109. Residues 167-188 (TGGAAAAAQDESEVDDTAGDRP) are disordered. Residues 176 to 188 (DESEVDDTAGDRP) show a composition bias toward acidic residues.

The protein belongs to the complex I 23 kDa subunit family. In terms of assembly, NDH-1 is composed of 14 different subunits. Subunits NuoA, H, J, K, L, M, N constitute the membrane sector of the complex. Requires [4Fe-4S] cluster as cofactor.

Its subcellular location is the cell membrane. It carries out the reaction a quinone + NADH + 5 H(+)(in) = a quinol + NAD(+) + 4 H(+)(out). NDH-1 shuttles electrons from NADH, via FMN and iron-sulfur (Fe-S) centers, to quinones in the respiratory chain. The immediate electron acceptor for the enzyme in this species is believed to be ubiquinone. Couples the redox reaction to proton translocation (for every two electrons transferred, four hydrogen ions are translocated across the cytoplasmic membrane), and thus conserves the redox energy in a proton gradient. In Rhodococcus jostii (strain RHA1), this protein is NADH-quinone oxidoreductase subunit I.